A 164-amino-acid chain; its full sequence is Glycine cleavage system H protein, mitochondrial (164 aa).

The N-terminal 34 residues, 1 to 34 (MALRLWASSAANALKISCSGATRAAPAYSISRYF), are a transit peptide targeting the mitochondrion. The 83-residue stretch at 56–138 (VATIGITDHA…YEDGWMIKVK (83 aa)) folds into the Lipoyl-binding domain. N6-lipoyllysine is present on Lys-97.

It belongs to the GcvH family. As to quaternary structure, the glycine cleavage system is composed of four proteins: P, T, L and H. Requires (R)-lipoate as cofactor.

It localises to the mitochondrion. The glycine cleavage system catalyzes the degradation of glycine. The H protein shuttles the methylamine group of glycine from the P protein to the T protein. The chain is Glycine cleavage system H protein, mitochondrial (GDCSH) from Oryza sativa subsp. indica (Rice).